A 315-amino-acid polypeptide reads, in one-letter code: Transaldolase (315 aa).

Residue K125 is the Schiff-base intermediate with substrate of the active site.

Belongs to the transaldolase family. Type 1 subfamily. Homodimer.

The protein resides in the cytoplasm. It catalyses the reaction D-sedoheptulose 7-phosphate + D-glyceraldehyde 3-phosphate = D-erythrose 4-phosphate + beta-D-fructose 6-phosphate. It functions in the pathway carbohydrate degradation; pentose phosphate pathway; D-glyceraldehyde 3-phosphate and beta-D-fructose 6-phosphate from D-ribose 5-phosphate and D-xylulose 5-phosphate (non-oxidative stage): step 2/3. Its function is as follows. Transaldolase is important for the balance of metabolites in the pentose-phosphate pathway. This is Transaldolase from Paracidovorax citrulli (strain AAC00-1) (Acidovorax citrulli).